A 100-amino-acid chain; its full sequence is Large ribosomal subunit protein bL21 (100 aa).

The protein belongs to the bacterial ribosomal protein bL21 family. Part of the 50S ribosomal subunit. Contacts protein L20.

This protein binds to 23S rRNA in the presence of protein L20. In Ureaplasma urealyticum serovar 10 (strain ATCC 33699 / Western), this protein is Large ribosomal subunit protein bL21.